Reading from the N-terminus, the 335-residue chain is Phosphoserine phosphatase RsbU (335 aa).

Residues 123–333 (DIGAISVPAK…DDFTLIVLRR (211 aa)) form the PPM-type phosphatase domain.

The catalysed reaction is O-phospho-L-serine + H2O = L-serine + phosphate. It catalyses the reaction O-phospho-D-serine + H2O = D-serine + phosphate. Stimulated by a long-lived interaction with RsbT. Positive regulator of sigma-B activity. Dephosphorylates RsbV in response to environmental stress conveyed from the RsbXST module. This Bacillus subtilis (strain 168) protein is Phosphoserine phosphatase RsbU (rsbU).